Consider the following 313-residue polypeptide: Olfactory receptor 1f45 (313 aa).

Over 1–25 (MSSTNQSSVTEFLLLGLSRQPQQQQ) the chain is Extracellular. A glycan (N-linked (GlcNAc...) asparagine) is linked at N5. The chain crosses the membrane as a helical span at residues 26 to 50 (LLFLLFLIMYLATVLGNLLIILAIG). Over 51–57 (TDSRLHT) the chain is Cytoplasmic. Residues 58–79 (PMYFFLSNLSFVDVCFSSTTVP) form a helical membrane-spanning segment. The Extracellular portion of the chain corresponds to 80–100 (KVLANHILGSQAISFSGCLTQ). C97 and C189 are joined by a disulfide. The chain crosses the membrane as a helical span at residues 101–120 (LYFLAVFGNMDNFLLAVMSY). Topologically, residues 121–139 (DRFVAICHPLHYTTKMTRQ) are cytoplasmic. A helical transmembrane segment spans residues 140-158 (LCVLLVVGSWVVANMNCLL). Topologically, residues 159–196 (HILLMARLSFCADNMIPHFFCDGTPLLKLSCSDTHLNE) are extracellular. Residues 197-219 (LMILTEGAVVMVTPFVCILISYI) form a helical membrane-spanning segment. Residues 220-236 (HITCAVLRVSSPRGGWK) lie on the Cytoplasmic side of the membrane. A helical transmembrane segment spans residues 237-260 (SFSTCGSHLAVVCLFYGTVIAVYF). Residues 261–272 (NPSSSHLAGRDM) lie on the Extracellular side of the membrane. The chain crosses the membrane as a helical span at residues 273 to 292 (AAAVMYAVVTPMLNPFIYSL). Topologically, residues 293-313 (RNSDMKAALRKVLAMRFPSKQ) are cytoplasmic.

Belongs to the G-protein coupled receptor 1 family. Olfactory epithelium.

It is found in the cell membrane. Its function is as follows. Odorant receptor. This is Olfactory receptor 1f45 (Or1f45) from Rattus norvegicus (Rat).